The chain runs to 199 residues: Prostatic spermine-binding protein (199 aa).

Residues 1–18 (MLLLLTLAFLASPTCRAQ) form the signal peptide. In terms of domain architecture, Jacalin-type lectin spans 19 to 151 (NVLGNAAGKY…VRGIGFKWGN (133 aa)). Asn-62 carries N-linked (GlcNAc...) asparagine glycosylation. Residues 159–199 (HYNNKEDKADNKDADNKDADNKDDGDEDDDGNDDDDQKDES) form a disordered region. Residues 160–180 (YNNKEDKADNKDADNKDADNK) are compositionally biased toward basic and acidic residues. The segment covering 181–199 (DDGDEDDDGNDDDDQKDES) has biased composition (acidic residues).

It to rat SBP. Prostate.

Functionally, this protein seems to be functional equivalent to rat prostatic spermine-binding protein, which is involved in polyamine binding. This chain is Prostatic spermine-binding protein (Sbp), found in Mus musculus (Mouse).